Reading from the N-terminus, the 141-residue chain is Large ribosomal subunit protein uL11 (141 aa).

Belongs to the universal ribosomal protein uL11 family. Part of the ribosomal stalk of the 50S ribosomal subunit. Interacts with L10 and the large rRNA to form the base of the stalk. L10 forms an elongated spine to which L12 dimers bind in a sequential fashion forming a multimeric L10(L12)X complex. In terms of processing, one or more lysine residues are methylated.

Its function is as follows. Forms part of the ribosomal stalk which helps the ribosome interact with GTP-bound translation factors. This is Large ribosomal subunit protein uL11 from Amoebophilus asiaticus (strain 5a2).